A 211-amino-acid chain; its full sequence is tRNA (guanine-N(7)-)-methyltransferase (211 aa).

S-adenosyl-L-methionine is bound by residues Glu-44, Asp-69, Asp-96, and Asp-118. Asp-118 is a catalytic residue. Lys-122 contributes to the substrate binding site. The tract at residues 124-129 (RHEKRR) is interaction with RNA. Substrate contacts are provided by residues Asp-154 and 191–194 (TEYE).

The protein belongs to the class I-like SAM-binding methyltransferase superfamily. TrmB family.

The enzyme catalyses guanosine(46) in tRNA + S-adenosyl-L-methionine = N(7)-methylguanosine(46) in tRNA + S-adenosyl-L-homocysteine. The protein operates within tRNA modification; N(7)-methylguanine-tRNA biosynthesis. In terms of biological role, catalyzes the formation of N(7)-methylguanine at position 46 (m7G46) in tRNA. The chain is tRNA (guanine-N(7)-)-methyltransferase from Streptococcus mutans serotype c (strain ATCC 700610 / UA159).